Reading from the N-terminus, the 245-residue chain is Eukaryotic translation initiation factor 6 (245 aa).

2 positions are modified to phosphoserine; by CK1: Ser174 and Ser175. At Ser231 the chain carries Phosphoserine.

The protein belongs to the eIF-6 family. As to quaternary structure, monomer. Associates with the 60S ribosomal subunit. Phosphorylation at Ser-174 and Ser-175 promotes nuclear export.

The protein localises to the cytoplasm. Its subcellular location is the nucleus. The protein resides in the nucleolus. Its function is as follows. Binds to the 60S ribosomal subunit and prevents its association with the 40S ribosomal subunit to form the 80S initiation complex in the cytoplasm. Is also involved in ribosome biogenesis. Associates with pre-60S subunits in the nucleus and is involved in its nuclear export. Cytoplasmic release of TIF6 from 60S subunits and nuclear relocalization is promoted by the GTPase RIA1/EFL1 and by SDO1. Also required for pre-rRNA processing. This is Eukaryotic translation initiation factor 6 from Saccharomyces cerevisiae (strain ATCC 204508 / S288c) (Baker's yeast).